Consider the following 485-residue polypeptide: MEKSWFNFLFSKGELEYRCELSKSMDSFAPIEKTTDRVIYDTDKNLYDWGERSSYYNNVDLLVSSKDIRNFISDDTFFVRDSNKNSYSIYFDIQNQKFEIDNGLSDLEVFFYSYRSSSYLNNRSKSDNDPHYDPSIKDTKYDCNNHINSCIDSYFRSHICIDSHFLSDSKNYNESYIYNLICSKSGKIRESQNYKIRTNMNRSDLIKDFDITQNYNQLWIQCDNCYALIYKKALKFKMNVCEQCGYYLKISSSDRIELSIDPGTWNPMDEDMVSTDPIQFHSREEPYQNRIDSAQKKTGLTDAVQTGTGQLNGIPVALGVMDFQFMGGSMGSVVGEKITRLIEYATTEFLPLILVCSSGGARMQEGSLSLMQMAKISSVLCDYQSSKKLFYISILTSPTTGGVTASFGMLGDIIIAEPYAYIAFAGKRVIEQTLKKAVPEGSQAAESLLRKGLLDAIVPRNPLKGVLTELFQLHAFFPLNKNEIK.

The region spanning 218-485 (LWIQCDNCYA…FFPLNKNEIK (268 aa)) is the CoA carboxyltransferase N-terminal domain. Residues Cys-222, Cys-225, Cys-241, and Cys-244 each contribute to the Zn(2+) site. The C4-type zinc finger occupies 222-244 (CDNCYALIYKKALKFKMNVCEQC).

This sequence belongs to the AccD/PCCB family. In terms of assembly, acetyl-CoA carboxylase is a heterohexamer composed of biotin carboxyl carrier protein, biotin carboxylase and 2 subunits each of ACCase subunit alpha and ACCase plastid-coded subunit beta (accD). The cofactor is Zn(2+).

The protein resides in the plastid. The protein localises to the chloroplast stroma. The enzyme catalyses N(6)-carboxybiotinyl-L-lysyl-[protein] + acetyl-CoA = N(6)-biotinyl-L-lysyl-[protein] + malonyl-CoA. Its pathway is lipid metabolism; malonyl-CoA biosynthesis; malonyl-CoA from acetyl-CoA: step 1/1. In terms of biological role, component of the acetyl coenzyme A carboxylase (ACC) complex. Biotin carboxylase (BC) catalyzes the carboxylation of biotin on its carrier protein (BCCP) and then the CO(2) group is transferred by the transcarboxylase to acetyl-CoA to form malonyl-CoA. This Aethionema cordifolium (Lebanon stonecress) protein is Acetyl-coenzyme A carboxylase carboxyl transferase subunit beta, chloroplastic.